The sequence spans 358 residues: Peptide chain release factor 1 (358 aa).

Gln236 carries the N5-methylglutamine modification.

It belongs to the prokaryotic/mitochondrial release factor family. Post-translationally, methylated by PrmC. Methylation increases the termination efficiency of RF1.

The protein localises to the cytoplasm. Functionally, peptide chain release factor 1 directs the termination of translation in response to the peptide chain termination codons UAG and UAA. In Corynebacterium aurimucosum (strain ATCC 700975 / DSM 44827 / CIP 107346 / CN-1) (Corynebacterium nigricans), this protein is Peptide chain release factor 1.